The primary structure comprises 407 residues: Cation efflux system protein CusB (407 aa).

Positions Met1–Ala26 are cleaved as a signal peptide.

Belongs to the membrane fusion protein (MFP) (TC 8.A.1) family. The cus efflux system is composed of CusA, CusB, CusC and CusF.

Functionally, part of a cation efflux system that mediates resistance to copper and silver. This is Cation efflux system protein CusB (cusB) from Escherichia coli O6:H1 (strain CFT073 / ATCC 700928 / UPEC).